A 392-amino-acid chain; its full sequence is Probable tRNA sulfurtransferase (392 aa).

The region spanning 59–167 is the THUMP domain; that stretch reads ADITDRVKKV…DQAFVFSNKI (109 aa). Residues 184 to 185, 209 to 210, Arg-266, Gly-288, and Gln-297 contribute to the ATP site; these read LL and HF.

The protein belongs to the ThiI family.

It localises to the cytoplasm. The enzyme catalyses [ThiI sulfur-carrier protein]-S-sulfanyl-L-cysteine + a uridine in tRNA + 2 reduced [2Fe-2S]-[ferredoxin] + ATP + H(+) = [ThiI sulfur-carrier protein]-L-cysteine + a 4-thiouridine in tRNA + 2 oxidized [2Fe-2S]-[ferredoxin] + AMP + diphosphate. The catalysed reaction is [ThiS sulfur-carrier protein]-C-terminal Gly-Gly-AMP + S-sulfanyl-L-cysteinyl-[cysteine desulfurase] + AH2 = [ThiS sulfur-carrier protein]-C-terminal-Gly-aminoethanethioate + L-cysteinyl-[cysteine desulfurase] + A + AMP + 2 H(+). It participates in cofactor biosynthesis; thiamine diphosphate biosynthesis. Functionally, catalyzes the ATP-dependent transfer of a sulfur to tRNA to produce 4-thiouridine in position 8 of tRNAs, which functions as a near-UV photosensor. Also catalyzes the transfer of sulfur to the sulfur carrier protein ThiS, forming ThiS-thiocarboxylate. This is a step in the synthesis of thiazole, in the thiamine biosynthesis pathway. The sulfur is donated as persulfide by IscS. This Alkaliphilus oremlandii (strain OhILAs) (Clostridium oremlandii (strain OhILAs)) protein is Probable tRNA sulfurtransferase.